We begin with the raw amino-acid sequence, 540 residues long: Type II methyltransferase M.AccI (540 aa).

The protein belongs to the N(4)/N(6)-methyltransferase family. In terms of assembly, monomer.

It carries out the reaction a 2'-deoxyadenosine in DNA + S-adenosyl-L-methionine = an N(6)-methyl-2'-deoxyadenosine in DNA + S-adenosyl-L-homocysteine + H(+). A gamma subtype methylase, recognizes the double-stranded sequence 5'-GTMKAC-3', methylates A-5 on both strands, and protects the DNA from cleavage by the AccI endonuclease. This Acinetobacter calcoaceticus protein is Type II methyltransferase M.AccI (accIM).